We begin with the raw amino-acid sequence, 67 residues long: Alpha-like toxin Lqh3 (67 aa).

An LCN-type CS-alpha/beta domain is found at 2 to 66 (RDGYIAQPEN…GIIVEGEKCH (65 aa)). 4 cysteine pairs are disulfide-bonded: cysteine 12-cysteine 65, cysteine 16-cysteine 37, cysteine 23-cysteine 47, and cysteine 27-cysteine 49. Serine 67 is modified (serine amide).

This sequence belongs to the long (4 C-C) scorpion toxin superfamily. Sodium channel inhibitor family. Alpha subfamily. In terms of assembly, monomer. In terms of tissue distribution, expressed by the venom gland.

The protein resides in the secreted. In terms of biological role, alpha toxins bind voltage-independently at site-3 of sodium channels (Nav) and inhibit the inactivation of the activated channels, thereby blocking neuronal transmission. The dissociation is voltage-dependent. This alpha-like toxin is highly toxic to insects and competes with LqhaIT on binding to insect sodium channels. Differs from classical anti-mammalian alpha-toxins as it inhibits sodium channel inactivation in cell bodies of hippocampus brain neurons, on which the anti-mammalian Lqh2 is inactive, and is unable to affect Nav1.2 in the rat brain, on which Lqh2 is highly active. Moreover, its pharmacological properties are unique in that its binding affinity for insect channels drops &gt;30-fold at pH 8.5 versus pH 6.5, and its rate of association with receptor site-3 on both insect and mammalian sodium channels is 4-15-fold slower compared with LqhaIT and Lqh2. In Leiurus hebraeus (Hebrew deathstalker scorpion), this protein is Alpha-like toxin Lqh3.